Reading from the N-terminus, the 358-residue chain is Peptide chain release factor 1 (358 aa).

Glutamine 233 carries the post-translational modification N5-methylglutamine.

This sequence belongs to the prokaryotic/mitochondrial release factor family. Methylated by PrmC. Methylation increases the termination efficiency of RF1.

Its subcellular location is the cytoplasm. Its function is as follows. Peptide chain release factor 1 directs the termination of translation in response to the peptide chain termination codons UAG and UAA. This is Peptide chain release factor 1 from Listeria innocua serovar 6a (strain ATCC BAA-680 / CLIP 11262).